The following is a 240-amino-acid chain: MSQGLQQQNNDHLVQSDDPEHPANLIPELCRKFYNWGWVTGTGGGTSIRRGEHIFIAPSGVQKELMQPHNIFVLQYPTPKYPPSERKYIRKPLDLKPSACTPLFLAAFERGAGCCIHTHSQWAVLVTLLVEREKGPEGCFEISNIEQIKGIPKGPGKGMLGYFDTLRIPIIDNTAFEEDLTGSLEKAMDAYPDTYAVLVRRHGIYVWGDNVAKAKTQCESLDYLFQLAVEMHKLGIPWVK.

Cys100 is a substrate binding site. Residues His117 and His119 each contribute to the Zn(2+) site. Residue Glu146 is the Proton donor/acceptor of the active site. Residue His202 coordinates Zn(2+).

Belongs to the aldolase class II family. MtnB subfamily. It depends on Zn(2+) as a cofactor.

It localises to the cytoplasm. The enzyme catalyses 5-(methylsulfanyl)-D-ribulose 1-phosphate = 5-methylsulfanyl-2,3-dioxopentyl phosphate + H2O. It functions in the pathway amino-acid biosynthesis; L-methionine biosynthesis via salvage pathway; L-methionine from S-methyl-5-thio-alpha-D-ribose 1-phosphate: step 2/6. Its function is as follows. Catalyzes the dehydration of methylthioribulose-1-phosphate (MTRu-1-P) into 2,3-diketo-5-methylthiopentyl-1-phosphate (DK-MTP-1-P). In Emericella nidulans (strain FGSC A4 / ATCC 38163 / CBS 112.46 / NRRL 194 / M139) (Aspergillus nidulans), this protein is Methylthioribulose-1-phosphate dehydratase.